The chain runs to 288 residues: Bifunctional protein FolD (288 aa).

Residues 166-168 (GAS) and I232 each bind NADP(+).

This sequence belongs to the tetrahydrofolate dehydrogenase/cyclohydrolase family. In terms of assembly, homodimer.

The catalysed reaction is (6R)-5,10-methylene-5,6,7,8-tetrahydrofolate + NADP(+) = (6R)-5,10-methenyltetrahydrofolate + NADPH. It catalyses the reaction (6R)-5,10-methenyltetrahydrofolate + H2O = (6R)-10-formyltetrahydrofolate + H(+). The protein operates within one-carbon metabolism; tetrahydrofolate interconversion. Catalyzes the oxidation of 5,10-methylenetetrahydrofolate to 5,10-methenyltetrahydrofolate and then the hydrolysis of 5,10-methenyltetrahydrofolate to 10-formyltetrahydrofolate. The polypeptide is Bifunctional protein FolD (Escherichia coli O8 (strain IAI1)).